The sequence spans 99 residues: Large ribosomal subunit protein uL23 (99 aa).

This sequence belongs to the universal ribosomal protein uL23 family. Part of the 50S ribosomal subunit. Contacts protein L29, and trigger factor when it is bound to the ribosome.

One of the early assembly proteins it binds 23S rRNA. One of the proteins that surrounds the polypeptide exit tunnel on the outside of the ribosome. Forms the main docking site for trigger factor binding to the ribosome. The protein is Large ribosomal subunit protein uL23 of Streptococcus suis (strain 98HAH33).